A 258-amino-acid polypeptide reads, in one-letter code: Envelope glycoprotein L (258 aa).

Positions 1–31 (MYECMFFSHRLTIGFYIPLIVLTTMSSLSES) are cleaved as a signal peptide. The gL betaherpesvirus-type domain occupies 36 to 243 (QKTACTVAAI…ILYQASLSGP (208 aa)). A disulfide bond links C145 and C150.

It belongs to the herpesviridae glycoprotein L (gL) family. Betaherpesvirinae gL subfamily. In terms of assembly, interacts with glycoprotein H (gH); this interaction is necessary for the correct processing and cell surface expression of gH. Forms the envelope pentamer complex (PC) composed of gH, gL, UL128, UL130, and UL131A. The pentamer interacts with host NRP2. Forms the envelope trimer complex composed of gH, gL, and gO. The trimer interacts with host PDGFRA.

It is found in the virion membrane. Its subcellular location is the host cell membrane. It localises to the host Golgi apparatus. The protein resides in the host trans-Golgi network. The heterodimer glycoprotein H-glycoprotein L is required for the fusion of viral and plasma membranes leading to virus entry into the host cell. Acts as a functional inhibitor of gH and maintains gH in an inhibited form. Upon binding to host integrins, gL dissociates from gH leading to activation of the viral fusion glycoproteins gB and gH. In human cytomegalovirus, forms two distincts complexes to mediate viral entry, a trimer and a pentamer at the surface of the virion envelope. The gH-gL-gO trimer is required for infection in fibroblasts by interacting with host PDGFRA. The gH-gL-UL128-UL130-UL131A pentamer is essential for viral entry in epithelial, endothelial and myeloid cells via interaction with host NRP2. This chain is Envelope glycoprotein L, found in Guinea pig cytomegalovirus (strain 22122) (GPCMV).